We begin with the raw amino-acid sequence, 150 residues long: Large ribosomal subunit protein bL9 (150 aa).

It belongs to the bacterial ribosomal protein bL9 family.

Binds to the 23S rRNA. The chain is Large ribosomal subunit protein bL9 from Neisseria meningitidis serogroup C (strain 053442).